Here is a 153-residue protein sequence, read N- to C-terminus: Carbohydrate-binding protein AWN (153 aa).

Positions 1–20 (MKLAAPSLALLLSTATLVSG) are cleaved as a signal peptide. N-acetylalanine is present on Ala21. 2 disulfides stabilise this stretch: Cys29-Cys50 and Cys73-Cys94. Positions 29–130 (CGGVLRDPPG…SPFHIYYYAD (102 aa)) constitute a CUB domain. The segment at 93–130 (ICGGISLVFRSSSNIATIKYLRTSGQRASPFHIYYYAD) is heparin-binding.

Belongs to the spermadhesin family. Post-translationally, partial N-acetylation differentiates isoforms AWN-1 (not acetylated) and AWN-2 (acetylated).

The protein resides in the secreted. Its function is as follows. AWN proteins mediate the binding of boar spermatozoa to component(s) of the egg's zona pellucida by a carbohydrate-binding mechanism. Awn proteins are secretory components of the male accessory glands being coated to the sperm surface at the time of ejaculation. They possess as well heparin-, serine-protease-inhibitor-binding capability. This is Carbohydrate-binding protein AWN from Sus scrofa (Pig).